The chain runs to 149 residues: Nucleoside diphosphate kinase (149 aa).

ATP is bound by residues K9, F57, R85, T91, R102, and N112. Residue H115 is the Pros-phosphohistidine intermediate of the active site.

It belongs to the NDK family. As to quaternary structure, homotetramer. Requires Mg(2+) as cofactor.

Its subcellular location is the cytoplasm. It catalyses the reaction a 2'-deoxyribonucleoside 5'-diphosphate + ATP = a 2'-deoxyribonucleoside 5'-triphosphate + ADP. The enzyme catalyses a ribonucleoside 5'-diphosphate + ATP = a ribonucleoside 5'-triphosphate + ADP. In terms of biological role, major role in the synthesis of nucleoside triphosphates other than ATP. The ATP gamma phosphate is transferred to the NDP beta phosphate via a ping-pong mechanism, using a phosphorylated active-site intermediate. This Staphylococcus aureus (strain Mu3 / ATCC 700698) protein is Nucleoside diphosphate kinase.